The chain runs to 281 residues: Ras-related protein Rab-40C (281 aa).

The GTP site is built by S23, G26, K27, and S46. The switch-I stretch occupies residues S41–I49. Mg(2+)-binding residues include S46 and D69. The GTP site is built by G72, N126, and R127. A switch-II region spans residues G72–Q88. An SOCS box domain is found at L175 to A228. The segment at S245–S281 is disordered. A compositionally biased stretch (polar residues) spans P270–S281. C273 carries S-palmitoyl cysteine lipidation. The S-geranylgeranyl cysteine moiety is linked to residue C278.

The protein belongs to the small GTPase superfamily. Rab family. As to quaternary structure, component of the cullin-5-RING E3 ubiquitin-protein ligase complex (ECS(RAB40C) complex) composed of CUL5, Elongin BC (ELOB and ELOC), RNF7/RBX2 and RAB40C. Interacts with protein phosphatase 6 (PP6) complex components ANKRD28, ANKRD52, PPP6C, PP6R1 and PP6R2; the interaction leads to ANKRD28 ubiquitination and decreased PP6 activity. Interacts with DAB2IP; DAB2IP acts as a GAP for RAB40C. The cofactor is Mg(2+).

It is found in the cell membrane. The protein resides in the cytoplasm. Its subcellular location is the cytosol. The protein localises to the golgi apparatus membrane. The catalysed reaction is GTP + H2O = GDP + phosphate + H(+). The protein operates within protein modification; protein ubiquitination. With respect to regulation, regulated by guanine nucleotide exchange factors (GEFs) which promote the exchange of bound GDP for free GTP. Regulated by GTPase activating proteins (GAPs) including DAB2IP, which increase the GTP hydrolysis activity. Inhibited by GDP dissociation inhibitors (GDIs). Functionally, RAB40C small GTPase acts as substrate-recognition component of the ECS(RAB40C) E3 ubiquitin ligase complex which mediates the ubiquitination and subsequent proteasomal degradation of target proteins. The Rab40 subfamily belongs to the Rab family that are key regulators of intracellular membrane trafficking, from the formation of transport vesicles to their fusion with membranes. Rabs cycle between an inactive GDP-bound form and an active GTP-bound form that is able to recruit to membranes different sets of downstream effectors directly responsible for vesicle formation, movement, tethering and fusion. As part of the ECS(RAB40C) complex, mediates ANKRD28 ubiquitination and degradation, thereby inhibiting protein phosphatase 6 (PP6) complex activity and focal adhesion assembly during cell migration. Also negatively regulate lipid droplets accumulation in a GTP-dependent manner. In Homo sapiens (Human), this protein is Ras-related protein Rab-40C.